A 156-amino-acid polypeptide reads, in one-letter code: Endoribonuclease YbeY (156 aa).

3 residues coordinate Zn(2+): His-122, His-126, and His-132.

It belongs to the endoribonuclease YbeY family. It depends on Zn(2+) as a cofactor.

It is found in the cytoplasm. Functionally, single strand-specific metallo-endoribonuclease involved in late-stage 70S ribosome quality control and in maturation of the 3' terminus of the 16S rRNA. The protein is Endoribonuclease YbeY of Bacillus cytotoxicus (strain DSM 22905 / CIP 110041 / 391-98 / NVH 391-98).